We begin with the raw amino-acid sequence, 87 residues long: MAHKKGASSTRNGRDSNAQYLGVKRFGGQVVSAGEIIVRQRGTHFHPGAGVGRGGDDTLFALTPGAVEFGTRRGRRVVNIVAAAAAE.

Belongs to the bacterial ribosomal protein bL27 family.

This Pseudarthrobacter chlorophenolicus (strain ATCC 700700 / DSM 12829 / CIP 107037 / JCM 12360 / KCTC 9906 / NCIMB 13794 / A6) (Arthrobacter chlorophenolicus) protein is Large ribosomal subunit protein bL27.